A 936-amino-acid polypeptide reads, in one-letter code: General transcription factor II-I repeat domain-containing protein 2 (936 aa).

The stretch at 95–189 is one GTF2I-like 1 repeat; that stretch reads EACPGEAQLL…FLGAESQLGG (95 aa). A disordered region spans residues 199 to 222; sequence PTVPPNDSYGPVSVKTEPMEDSGT. Residues 319–413 form a GTF2I-like 2 repeat; the sequence is LSGLEKIKQL…LPGLELSNVG (95 aa).

This sequence belongs to the TFII-I family. As to expression, ubiquitous.

It is found in the nucleus. In Mus musculus (Mouse), this protein is General transcription factor II-I repeat domain-containing protein 2 (Gtf2ird2).